The sequence spans 245 residues: 8-amino-3,8-dideoxy-manno-octulosonate cytidylyltransferase (245 aa).

Belongs to the KdsB family.

The protein localises to the cytoplasm. The catalysed reaction is 8-amino-3,8-dideoxy-alpha-D-manno-octulosonate + CTP = CMP-8-amino-3,8-dideoxy-alpha-D-manno-oct-2-ulosonate + diphosphate. The protein operates within bacterial outer membrane biogenesis; lipopolysaccharide biosynthesis. Activates KDO8N (a required 8-carbon sugar) for incorporation into bacterial lipopolysaccharide in the Shewanella genus. This chain is 8-amino-3,8-dideoxy-manno-octulosonate cytidylyltransferase, found in Shewanella baltica (strain OS185).